We begin with the raw amino-acid sequence, 132 residues long: Glycine-rich protein 3 (132 aa).

Positions 1–20 (MRYAVLLAVVLLLGAFTAEA) are cleaved as a signal peptide.

As to expression, prismatic layer of shell (at protein level). Expressed primarily in the mantle with highest level in the mantle edge and lower level in the mantle pallium.

It is found in the secreted. The protein is Glycine-rich protein 3 of Pinctada maxima (Silver-lipped pearl oyster).